Here is a 430-residue protein sequence, read N- to C-terminus: Histidine--tRNA ligase (430 aa).

Belongs to the class-II aminoacyl-tRNA synthetase family.

It localises to the cytoplasm. The catalysed reaction is tRNA(His) + L-histidine + ATP = L-histidyl-tRNA(His) + AMP + diphosphate + H(+). This Metallosphaera sedula (strain ATCC 51363 / DSM 5348 / JCM 9185 / NBRC 15509 / TH2) protein is Histidine--tRNA ligase.